We begin with the raw amino-acid sequence, 468 residues long: MDPEDRSEIAFFDVETTVPKRGQRFAILEFGSILVCPKKLTELRSYTTLVQPADLSLISSLSVRCNGIKRDDVVLAPLFADIADTVYDILHGRIWAGHNILRFDCARIREAFAEIGRQPPEPKGAIDSLGLLTQKFGRRAGDMKMATLARYFGLGNQTHRSLDDVRMNLEVLKYCATVLFLESSLPYAHVDNSVSPETISSRRRIDASREGNTVTTSVRLPSISENSAAQPDPFNMSVLRNEMASDNHIQSDILMEEEQIEPSDVVASENTSDHEGFLTPDAMSLSNIKAMLFPFYPGSQMMKLKLLHGDSPLQLYCSYLKIRFGVNGKFLDNTGRRRLNFVVDLNPSLYSILEACDSNAQKLSVDSGSTSEWNPVVNPMKGFVNYPNARIHIATEINGDEARYATEIHQRESSGATQKLIFSNPNNEELESLLTTGSVVDAFLSLEPYDYQQKAGIRLVAKKLVIQS.

The region spanning 11-172 (FFDVETTVPK…DDVRMNLEVL (162 aa)) is the Exonuclease domain. Asp13 and Glu15 together coordinate Mg(2+). Residue His159 is the Proton donor/acceptor of the active site. Asp164 contacts Mg(2+).

The cofactor is Mg(2+). In terms of tissue distribution, expressed in the sieve elements and phloem pole pericycle cells.

It is found in the cytoplasm. The protein localises to the nucleus. Its function is as follows. Probable exonuclease involved in enuclation of sieve elements. This is Protein NEN1 from Arabidopsis thaliana (Mouse-ear cress).